A 218-amino-acid chain; its full sequence is MSAAPPRLVVGLGNPGAEYSETRHNAGFWFCERLADTLGVRFSHESRFHGLVANAREAGVWLLMPQTYMNRSGQAIGALARFYRIAPAEILVVHDELDIPPGQLRLKFGGGLGGHNGLKDTSAHLGTNDYWRLRVGIGHPGDRNEVVNFVLKPARREEQTLIDESLDRALAAWPTLAKGDWNTATQRLNARPAPPKPPKAPKAPQPAAADQPKDESQP.

A tRNA-binding site is contributed by Tyr-19. The active-site Proton acceptor is the His-24. Residues Tyr-68, Asn-70, and Asn-116 each contribute to the tRNA site. Positions Trp-181–Pro-218 are disordered. A compositionally biased stretch (pro residues) spans Pro-192–Pro-204.

The protein belongs to the PTH family. As to quaternary structure, monomer.

It is found in the cytoplasm. It catalyses the reaction an N-acyl-L-alpha-aminoacyl-tRNA + H2O = an N-acyl-L-amino acid + a tRNA + H(+). In terms of biological role, hydrolyzes ribosome-free peptidyl-tRNAs (with 1 or more amino acids incorporated), which drop off the ribosome during protein synthesis, or as a result of ribosome stalling. Functionally, catalyzes the release of premature peptidyl moieties from peptidyl-tRNA molecules trapped in stalled 50S ribosomal subunits, and thus maintains levels of free tRNAs and 50S ribosomes. The protein is Peptidyl-tRNA hydrolase of Azoarcus sp. (strain BH72).